Here is a 134-residue protein sequence, read N- to C-terminus: B3 domain-containing protein At1g16640 (134 aa).

The TF-B3 DNA-binding region spans 7–100; the sequence is VQFMKPFISE…TFYVIIYGHN (94 aa).

It is found in the nucleus. The protein is B3 domain-containing protein At1g16640 of Arabidopsis thaliana (Mouse-ear cress).